Consider the following 323-residue polypeptide: Acetyl-coenzyme A carboxylase carboxyl transferase subunit alpha (323 aa).

The CoA carboxyltransferase C-terminal domain maps to 36–293 (ELELLSAKAQ…KEEVVKNLQI (258 aa)).

Belongs to the AccA family. In terms of assembly, acetyl-CoA carboxylase is a heterohexamer composed of biotin carboxyl carrier protein (AccB), biotin carboxylase (AccC) and two subunits each of ACCase subunit alpha (AccA) and ACCase subunit beta (AccD).

Its subcellular location is the cytoplasm. It catalyses the reaction N(6)-carboxybiotinyl-L-lysyl-[protein] + acetyl-CoA = N(6)-biotinyl-L-lysyl-[protein] + malonyl-CoA. It functions in the pathway lipid metabolism; malonyl-CoA biosynthesis; malonyl-CoA from acetyl-CoA: step 1/1. In terms of biological role, component of the acetyl coenzyme A carboxylase (ACC) complex. First, biotin carboxylase catalyzes the carboxylation of biotin on its carrier protein (BCCP) and then the CO(2) group is transferred by the carboxyltransferase to acetyl-CoA to form malonyl-CoA. The polypeptide is Acetyl-coenzyme A carboxylase carboxyl transferase subunit alpha (Carboxydothermus hydrogenoformans (strain ATCC BAA-161 / DSM 6008 / Z-2901)).